Reading from the N-terminus, the 1269-residue chain is Histone-lysine N-methyltransferase SETDB1 (1269 aa).

A coiled-coil region spans residues 9 to 63 (KELGISMDDLRELIDRELEKIEFVKQRKAQLLEMEQLVKQKEAEVDHVDKLFDNA). Disordered regions lie at residues 85–121 (YKESSSEDEGSSKPTEVIEIPDEDDDDVMSVGSGEAV) and 153–188 (QKKSDGPQTRFSSHPSSPTSSVGGSNQASASNDMSK). Over residues 103-112 (EIPDEDDDDV) the composition is skewed to acidic residues. The segment covering 164–177 (SSHPSSPTSSVGGS) has biased composition (low complexity). 2 consecutive Tudor domains span residues 250 to 312 (ENLT…RPWS) and 340 to 395 (VLLK…MFSM). Positions 396–414 (KTSNASTQEKQQAGQQRTR) are enriched in polar residues. The tract at residues 396–516 (KTSNASTQEK…FQSNQSVQPV (121 aa)) is disordered. Residues 462–476 (DSQQAQSKKQVAKKS) are compositionally biased toward low complexity. Positions 486-497 (SGQSSPIPTESV) are enriched in polar residues. An MBD domain is found at 620 to 691 (HRGKNPLLVP…EMFCLDPYVL (72 aa)). The Pre-SET domain occupies 753–826 (VGCDCTDGCR…MCNNRLVQHG (74 aa)). The Zn(2+) site is built by Cys-755, Cys-757, Cys-761, Cys-767, Cys-769, Cys-807, Cys-811, Cys-813, and Cys-818. An SET domain is found at 829–1244 (VRLQLFKTQN…AGTELTWDYN (416 aa)). Residues 839–841 (KGW), Asp-877, and Tyr-879 each bind S-adenosyl-L-methionine. The interval 894 to 1139 (EGYESDAKSS…VAASAGPVKR (246 aa)) is disordered. The span at 919-932 (SGSEDQEESNDSSD) shows a compositional bias: acidic residues. Basic and acidic residues-rich tracts occupy residues 968 to 989 (ASKDSRTRDETTDCKLPEETSK) and 1021 to 1033 (ETDKPKESEEASK). Residues 1078–1094 (TEEVLTLSSSSDSEVGS) are compositionally biased toward low complexity. The span at 1106-1120 (ATANDSDDIQTISSG) shows a compositional bias: polar residues. S-adenosyl-L-methionine contacts are provided by residues Arg-1198 and 1201 to 1202 (NH). 4 residues coordinate Zn(2+): Cys-1204, Cys-1257, Cys-1259, and Cys-1264. A Post-SET domain is found at 1253-1269 (KKLLCCCGSTECRGRLL).

Belongs to the class V-like SAM-binding methyltransferase superfamily. Histone-lysine methyltransferase family. Suvar3-9 subfamily.

Its subcellular location is the nucleus. The protein resides in the chromosome. It catalyses the reaction N(6),N(6)-dimethyl-L-lysyl(9)-[histone H3] + S-adenosyl-L-methionine = N(6),N(6),N(6)-trimethyl-L-lysyl(9)-[histone H3] + S-adenosyl-L-homocysteine + H(+). In terms of biological role, histone methyltransferase that specifically trimethylates 'Lys-9' of histone H3. H3 'Lys-9' trimethylation represents a specific tag for epigenetic transcriptional repression by recruiting HP1 (CBX1, CBX3 and/or CBX5) proteins to methylated histones. Mainly functions in euchromatin regions, thereby playing a central role in the silencing of euchromatic genes. H3 'Lys-9' trimethylation is coordinated with DNA methylation. Plays a role in promoter hypermethylation and transcriptional silencing of tumor suppressor genes (TSGs) or other tumor-related genes. Also required to maintain a transcriptionally repressive state of genes in undifferentiated embryonic stem cells (ESCs). Associates at promoter regions of tumor suppressor genes (TSGs) leading to their gene silencing. This is Histone-lysine N-methyltransferase SETDB1 (setdb1) from Xenopus laevis (African clawed frog).